A 21-amino-acid polypeptide reads, in one-letter code: Cardiotoxin-like basic polypeptide ah (21 aa).

The protein belongs to the three-finger toxin family. Short-chain subfamily. Orphan group XV sub-subfamily. Post-translationally, contains 4 disulfide bonds. As to expression, expressed by the venom gland.

The protein resides in the secreted. Its subcellular location is the target cell membrane. Its function is as follows. Has hemolytic activity under low-lecithin conditions. Has low cytotoxic activity. Inhibits the expression of VEGF and bFGF in human non-small-cell lung cancer cell line NCI-H1299 in a dose-dependent manner. In Naja atra (Chinese cobra), this protein is Cardiotoxin-like basic polypeptide ah.